The following is a 212-amino-acid chain: Ion-translocating oxidoreductase complex subunit G (212 aa).

Residues 9–29 (GLLLALFALLCTGLVAVVNQQ) form a helical membrane-spanning segment. At Thr-176 the chain carries FMN phosphoryl threonine.

Belongs to the RnfG family. In terms of assembly, the complex is composed of six subunits: RnfA, RnfB, RnfC, RnfD, RnfE and RnfG. FMN is required as a cofactor.

It is found in the cell inner membrane. In terms of biological role, part of a membrane-bound complex that couples electron transfer with translocation of ions across the membrane. This chain is Ion-translocating oxidoreductase complex subunit G, found in Shewanella oneidensis (strain ATCC 700550 / JCM 31522 / CIP 106686 / LMG 19005 / NCIMB 14063 / MR-1).